A 161-amino-acid polypeptide reads, in one-letter code: Nucleotide-binding protein BamMC406_2474 (161 aa).

Belongs to the YajQ family.

Its function is as follows. Nucleotide-binding protein. This chain is Nucleotide-binding protein BamMC406_2474, found in Burkholderia ambifaria (strain MC40-6).